A 479-amino-acid chain; its full sequence is Altronate oxidoreductase (479 aa).

NAD(+) is bound at residue 18–29 (IIQFGEGNFLRA).

The protein belongs to the mannitol dehydrogenase family. UxaB subfamily.

It carries out the reaction D-altronate + NAD(+) = keto-D-tagaturonate + NADH + H(+). Its pathway is carbohydrate metabolism; pentose and glucuronate interconversion. The polypeptide is Altronate oxidoreductase (Bacteroides thetaiotaomicron (strain ATCC 29148 / DSM 2079 / JCM 5827 / CCUG 10774 / NCTC 10582 / VPI-5482 / E50)).